A 281-amino-acid chain; its full sequence is 3-mercaptopyruvate sulfurtransferase (281 aa).

Rhodanese domains lie at 17-135 and 165-278; these read DDPE…LLEE and HENT…LPVE. Residue Arg179 participates in substrate binding. Cys238 serves as the catalytic Cysteine persulfide intermediate. A substrate specificity region spans residues 238–244; that stretch reads CGSGVTA.

In terms of assembly, monomer.

Its subcellular location is the cytoplasm. It catalyses the reaction 2-oxo-3-sulfanylpropanoate + [thioredoxin]-dithiol = [thioredoxin]-disulfide + hydrogen sulfide + pyruvate + H(+). Functionally, catalyzes the transfer of sulfur from 3-mercaptopyruvate to a thiol-containing acceptor to form an intramolecular disulfide releasing hydrogen sulfide and pyruvate. May be involved in the enhancement of bacterial growth inhibition by serine. The protein is 3-mercaptopyruvate sulfurtransferase (sseA) of Escherichia coli (strain K12).